A 289-amino-acid polypeptide reads, in one-letter code: MPSLKDLKNRIGSVKNTRKITKAMQMVAAAKLRRAQEAAEAARPFAERMTAVMTGLAGSVGSSESAPRLLAGTGSDKVHLLVVMTAERGLCGGFNSSIVRLARAHAAKLLTQGKTVKILTVGKKGREQLRRDLGQHFIGHVDLSEVKRMGYPVAQGIARDLLDRFDKGEFDVATIFFARFQSVINQVPTAQQVIPAVFEGEGEVSSLYDYEPSEEGVLADLLPRGVATQIFTALLENGASEQGARMSAMDNATRNAGDMINRLTIEYNRSRQAAITKELIEIISGAEAL.

Belongs to the ATPase gamma chain family. In terms of assembly, F-type ATPases have 2 components, CF(1) - the catalytic core - and CF(0) - the membrane proton channel. CF(1) has five subunits: alpha(3), beta(3), gamma(1), delta(1), epsilon(1). CF(0) has three main subunits: a, b and c.

The protein resides in the cell inner membrane. Its function is as follows. Produces ATP from ADP in the presence of a proton gradient across the membrane. The gamma chain is believed to be important in regulating ATPase activity and the flow of protons through the CF(0) complex. This is ATP synthase gamma chain from Cereibacter sphaeroides (strain ATCC 17023 / DSM 158 / JCM 6121 / CCUG 31486 / LMG 2827 / NBRC 12203 / NCIMB 8253 / ATH 2.4.1.) (Rhodobacter sphaeroides).